A 641-amino-acid polypeptide reads, in one-letter code: Tetracycline resistance protein TetQ (641 aa).

In terms of domain architecture, tr-type G spans M1–A244. GTP contacts are provided by residues A10–T17, D74–H78, and N128–D131.

It belongs to the TRAFAC class translation factor GTPase superfamily. Classic translation factor GTPase family. TetM/TetO subfamily.

Abolishes the inhibitory effect of tetracyclin on protein synthesis by a non-covalent modification of the ribosomes. This is Tetracycline resistance protein TetQ (tetQ) from Bacteroides thetaiotaomicron.